A 185-amino-acid polypeptide reads, in one-letter code: Small ribosomal subunit protein bS6 (185 aa).

Basic and acidic residues predominate over residues 115-141 (AAQKAAAEKAEAARLEAEKAAEEEAAK). The interval 115–185 (AAQKAAAEKA…EEPKSDEEDA (71 aa)) is disordered. The segment covering 142–169 (AAEAQAKEAPAAEAPAEEAPAAEAPAEA) has biased composition (low complexity). Over residues 170-185 (PAEEPAEEPKSDEEDA) the composition is skewed to acidic residues.

This sequence belongs to the bacterial ribosomal protein bS6 family.

In terms of biological role, binds together with bS18 to 16S ribosomal RNA. The chain is Small ribosomal subunit protein bS6 from Desulfatibacillum aliphaticivorans.